Consider the following 316-residue polypeptide: 4-hydroxy-3-methylbut-2-enyl diphosphate reductase (316 aa).

Residue C12 participates in [4Fe-4S] cluster binding. (2E)-4-hydroxy-3-methylbut-2-enyl diphosphate-binding residues include H41 and H74. Dimethylallyl diphosphate-binding residues include H41 and H74. Residues H41 and H74 each coordinate isopentenyl diphosphate. C96 provides a ligand contact to [4Fe-4S] cluster. A (2E)-4-hydroxy-3-methylbut-2-enyl diphosphate-binding site is contributed by H124. Position 124 (H124) interacts with dimethylallyl diphosphate. Residue H124 coordinates isopentenyl diphosphate. Residue E126 is the Proton donor of the active site. T169 is a (2E)-4-hydroxy-3-methylbut-2-enyl diphosphate binding site. C199 contacts [4Fe-4S] cluster. (2E)-4-hydroxy-3-methylbut-2-enyl diphosphate is bound by residues S227, S228, N229, and S271. 4 residues coordinate dimethylallyl diphosphate: S227, S228, N229, and S271. Isopentenyl diphosphate is bound by residues S227, S228, N229, and S271.

This sequence belongs to the IspH family. The cofactor is [4Fe-4S] cluster.

It catalyses the reaction isopentenyl diphosphate + 2 oxidized [2Fe-2S]-[ferredoxin] + H2O = (2E)-4-hydroxy-3-methylbut-2-enyl diphosphate + 2 reduced [2Fe-2S]-[ferredoxin] + 2 H(+). The enzyme catalyses dimethylallyl diphosphate + 2 oxidized [2Fe-2S]-[ferredoxin] + H2O = (2E)-4-hydroxy-3-methylbut-2-enyl diphosphate + 2 reduced [2Fe-2S]-[ferredoxin] + 2 H(+). The protein operates within isoprenoid biosynthesis; dimethylallyl diphosphate biosynthesis; dimethylallyl diphosphate from (2E)-4-hydroxy-3-methylbutenyl diphosphate: step 1/1. It functions in the pathway isoprenoid biosynthesis; isopentenyl diphosphate biosynthesis via DXP pathway; isopentenyl diphosphate from 1-deoxy-D-xylulose 5-phosphate: step 6/6. Catalyzes the conversion of 1-hydroxy-2-methyl-2-(E)-butenyl 4-diphosphate (HMBPP) into a mixture of isopentenyl diphosphate (IPP) and dimethylallyl diphosphate (DMAPP). Acts in the terminal step of the DOXP/MEP pathway for isoprenoid precursor biosynthesis. The polypeptide is 4-hydroxy-3-methylbut-2-enyl diphosphate reductase (Xylella fastidiosa (strain M12)).